Reading from the N-terminus, the 124-residue chain is p53-regulated apoptosis-inducing protein 1 (124 aa).

Over residues Met1–Cys16 the composition is skewed to polar residues. The tract at residues Met1–Gly46 is disordered.

In terms of tissue distribution, only found to be expressed in thymus.

Its subcellular location is the mitochondrion. Its function is as follows. May play an important role in mediating p53/TP53-dependent apoptosis. The protein is p53-regulated apoptosis-inducing protein 1 (TP53AIP1) of Homo sapiens (Human).